Reading from the N-terminus, the 99-residue chain is Integration host factor subunit alpha (99 aa).

Belongs to the bacterial histone-like protein family. As to quaternary structure, heterodimer of an alpha and a beta chain.

In terms of biological role, this protein is one of the two subunits of integration host factor, a specific DNA-binding protein that functions in genetic recombination as well as in transcriptional and translational control. This chain is Integration host factor subunit alpha, found in Pseudoalteromonas translucida (strain TAC 125).